Reading from the N-terminus, the 530-residue chain is Poly(U)-binding-splicing factor PUF60 (530 aa).

Positions 1 to 487 (MATATIALGT…EDAEIIVKIF (487 aa)) are inhibits homodimerization. Lys-14 is covalently cross-linked (Glycyl lysine isopeptide (Lys-Gly) (interchain with G-Cter in SUMO2)). The residue at position 31 (Thr-31) is a Phosphothreonine. The interval 48–530 (QSIKSVLVKQ…ERFDNSDLSA (483 aa)) is inhibits transcriptional repression, interaction with ERCC3 and apoptosis induction. Residue Lys-51 forms a Glycyl lysine isopeptide (Lys-Gly) (interchain with G-Cter in SUMO2) linkage. A Phosphoserine modification is found at Ser-83. RRM domains are found at residues 100 to 178 (CRVY…RPSN) and 197 to 275 (NRIY…KAVT). A Phosphoserine modification is found at Ser-215. N6-acetyllysine is present on Lys-222. Position 285 is a phosphothreonine (Thr-285). Positions 387–408 (KKEKEEEELFPESERPEMLSEQ) are disordered. Residue Lys-390 forms a Glycyl lysine isopeptide (Lys-Gly) (interchain with G-Cter in SUMO2) linkage. Residues 398–408 (ESERPEMLSEQ) show a composition bias toward basic and acidic residues. N6-acetyllysine is present on Lys-425. Residue Lys-429 forms a Glycyl lysine isopeptide (Lys-Gly) (interchain with G-Cter in SUMO2) linkage. The RRM 3; atypical domain maps to 433–520 (TVMVLRNMVD…RKVVAEVYDQ (88 aa)).

It belongs to the RRM half pint family. In terms of assembly, homodimer. Associates with the spliceosome. Found in a complex with RO60 and Y5 RNA. Found in a complex with FUBP1 and far upstream element (FUSE) DNA segment. Interacts directly with ERCC3. Interacts with CDK7 and GTF2H1. Interacts with SRSF11/P54. Interacts with ARGLU1; interaction may be involved in ARGLU1-mediated modulation of alternative splicing.

Its subcellular location is the nucleus. Its function is as follows. DNA- and RNA-binding protein, involved in several nuclear processes such as pre-mRNA splicing, apoptosis and transcription regulation. In association with FUBP1 regulates MYC transcription at the P2 promoter through the core-TFIIH basal transcription factor. Acts as a transcriptional repressor through the core-TFIIH basal transcription factor. Represses FUBP1-induced transcriptional activation but not basal transcription. Decreases ERCC3 helicase activity. Is also involved in pre-mRNA splicing. Promotes splicing of an intron with weak 3'-splice site and pyrimidine tract in a cooperative manner with U2AF2. Involved in apoptosis induction when overexpressed in HeLa cells. Modulates alternative splicing of several mRNAs. Binds to relaxed DNA of active promoter regions. Binds to the pyrimidine tract and 3'-splice site regions of pre-mRNA; binding is enhanced in presence of U2AF2. Binds to Y5 RNA in association with RO60. Binds to poly(U) RNA. This chain is Poly(U)-binding-splicing factor PUF60, found in Bos taurus (Bovine).